A 191-amino-acid polypeptide reads, in one-letter code: Small ribosomal subunit protein uS5 (191 aa).

The segment at 1-21 (MAAERERGGRERSREREERDS) is disordered. In terms of domain architecture, S5 DRBM spans 23–86 (FVDKLVHINR…ESAKRNLTRV (64 aa)).

Part of the 30S ribosomal subunit. Contacts proteins S4 and S8.

Its function is as follows. With S4 and S12 plays an important role in translational accuracy. In terms of biological role, located at the back of the 30S subunit body where it stabilizes the conformation of the head with respect to the body. In Rhodopseudomonas palustris (strain ATCC BAA-98 / CGA009), this protein is Small ribosomal subunit protein uS5.